Here is a 679-residue protein sequence, read N- to C-terminus: MHDKKSPMANSHYLKNLKQQFRNKNLIETTIHLVKCNDHDSLAFLARTYGVPPQLRHVVWPILLKYHPMCISPNITSNTISWDPITNDFILNDPFLKSKAPTDKQDKSDDENILPYDIESIILHDLKKYFHSRSNPAGSSSNANTTNIATPTPVSSSDASTISSMEVLSPSLDYEFQIIETLKNAIVKFLLKWSKIFKYESGLAWIALGLAEWYPIYPYETMSPFNETHSFYEVEDYVVLSGRKHALLSTNNGNNGNSNSSSNNTNNNNTNITSGMHNLSINTNTSLHNSPYISHTLSYLYKEYPLPFELRSKLPTKPIFSFSALFERLALVILHCPDTILAHKQLKNDSNASSSSKANSNFNTNYFPIISGGDLSFQTQVFFKVFSSILPELYQPLTEESSLQPSSSRNSWIYWWLKCSGAKALQRQDRGRVWDLLLGWRPKPNMDTINFFLNYNDKKMDHLYHDTPQCDNEQYWMKDWIALYNNDPFWFPDLDSMALGSKKFPYDYSVFKELILRNRYGGTQSKAQKDNTVPSPGSDSNDKSELKLPFSSIDPHMQLIFIFIAILQFNEFKLLEFEEAEIPEFLNNVPLLTKFDDSSYRKLYENTESSITSLPSSPTTSTMASLQSSSNSSAHISNYHMLIEVGNDAKASHCFDDLLNMAGDIWRKWLWRELEESSL.

The region spanning 50–441 (GVPPQLRHVV…RVWDLLLGWR (392 aa)) is the Rab-GAP TBC domain. Positions 135 to 153 (NPAGSSSNANTTNIATPTP) are enriched in low complexity. 3 disordered regions span residues 135–159 (NPAG…SSDA), 250–271 (TNNG…NNTN), and 524–544 (QSKA…NDKS). The span at 524–539 (QSKAQKDNTVPSPGSD) shows a compositional bias: polar residues.

This sequence belongs to the OCA5 family.

Its subcellular location is the cytoplasm. In terms of biological role, required for replication of brome mosaic virus (BMV), a positive-strand RNA virus. The polypeptide is Oxidant-induced cell-cycle arrest protein 5 (OCA5) (Saccharomyces cerevisiae (strain Lalvin EC1118 / Prise de mousse) (Baker's yeast)).